A 138-amino-acid chain; its full sequence is Large ribosomal subunit protein bL19 (138 aa).

This sequence belongs to the bacterial ribosomal protein bL19 family.

Its function is as follows. This protein is located at the 30S-50S ribosomal subunit interface and may play a role in the structure and function of the aminoacyl-tRNA binding site. The protein is Large ribosomal subunit protein bL19 of Rickettsia rickettsii (strain Iowa).